We begin with the raw amino-acid sequence, 175 residues long: MNLKEKFRHVLNFPKEGIDFIDITTVLQDKDAFKYAIDSLVNLVKDLDFDLIVGPESRGFIFGAPVAYVLNKGLVLVRKKGKLPYKTVSVEYELEYGKDILEMHIDAIQPGQKVVIIDDLLATGGTTLSNIKLVEKLGGKVVGIAYLVELTYLNGRENLKGYDVRSVVQFESSLI.

This sequence belongs to the purine/pyrimidine phosphoribosyltransferase family. In terms of assembly, homodimer.

It localises to the cytoplasm. It catalyses the reaction AMP + diphosphate = 5-phospho-alpha-D-ribose 1-diphosphate + adenine. The protein operates within purine metabolism; AMP biosynthesis via salvage pathway; AMP from adenine: step 1/1. Its function is as follows. Catalyzes a salvage reaction resulting in the formation of AMP, that is energically less costly than de novo synthesis. This Caldicellulosiruptor saccharolyticus (strain ATCC 43494 / DSM 8903 / Tp8T 6331) protein is Adenine phosphoribosyltransferase.